The sequence spans 270 residues: Proteasome subunit beta (270 aa).

Positions 1–47 (MSNRGRLGDAFLRPGSSSFLDFLSDHAPELLPGRSAAAGNAPLAPHA) are cleaved as a propeptide — removed in mature form; by autocatalysis. Thr48 functions as the Nucleophile in the catalytic mechanism.

It belongs to the peptidase T1B family. As to quaternary structure, the 20S proteasome core is composed of 14 alpha and 14 beta subunits that assemble into four stacked heptameric rings, resulting in a barrel-shaped structure. The two inner rings, each composed of seven catalytic beta subunits, are sandwiched by two outer rings, each composed of seven alpha subunits. The catalytic chamber with the active sites is on the inside of the barrel. Has a gated structure, the ends of the cylinder being occluded by the N-termini of the alpha-subunits. Is capped by the proteasome-associated ATPase, ARC.

Its subcellular location is the cytoplasm. It catalyses the reaction Cleavage of peptide bonds with very broad specificity.. Its pathway is protein degradation; proteasomal Pup-dependent pathway. Its activity is regulated as follows. The formation of the proteasomal ATPase ARC-20S proteasome complex, likely via the docking of the C-termini of ARC into the intersubunit pockets in the alpha-rings, may trigger opening of the gate for substrate entry. Interconversion between the open-gate and close-gate conformations leads to a dynamic regulation of the 20S proteasome proteolysis activity. Its function is as follows. Component of the proteasome core, a large protease complex with broad specificity involved in protein degradation. This is Proteasome subunit beta from Xylanimonas cellulosilytica (strain DSM 15894 / JCM 12276 / CECT 5975 / KCTC 9989 / LMG 20990 / NBRC 107835 / XIL07).